The primary structure comprises 552 residues: Cation/acetate symporter ActP (552 aa).

A run of 14 helical transmembrane segments spans residues 6–26 (LLAVLALLLSGPVVAADAIAG), 35–55 (MEAIVMFLIFVAMTLGITYWA), 78–98 (GLAMAGDFMSAASFLGISALV), 103–123 (FDGLIYSLGFLVGWPIILFLI), 151–171 (LSACGSLVVVALYLIAQMVGA), 185–205 (VAVVLVGILMVMYVLFGGMLA), 208–228 (WVQIIKAVLLLFGASFMAIMV), 264–284 (ISALSLGLGLMFGTAGLPHIL), 305–325 (GLMGYFYFLTFIIGFGAILLV), 357–377 (LFLGFISAVAFATILAVVAGL), 407–427 (VSKITVVALGVVAILLGILFE), 431–451 (IAFMVGLAFSIAASCNFPIIL), 467–487 (GGWLGLLTAVILMILGPTIWV), and 496–516 (IFPYEYPALFSMLVAFIGTWL).

The protein belongs to the sodium:solute symporter (SSF) (TC 2.A.21) family.

The protein resides in the cell inner membrane. Functionally, transports acetate. The chain is Cation/acetate symporter ActP from Erwinia tasmaniensis (strain DSM 17950 / CFBP 7177 / CIP 109463 / NCPPB 4357 / Et1/99).